We begin with the raw amino-acid sequence, 475 residues long: ESX-3 secretion system protein EccD3 (475 aa).

A run of 11 helical transmembrane segments spans residues 132-152 (IARG…GLSV), 161-181 (LLGQ…ALAV), 186-206 (AVLA…AFAL), 212-232 (FGAP…LISM), 241-261 (IAVF…AGAA), 264-284 (WVIS…IVTV), 333-353 (GVIA…VSSA), 354-374 (NASP…ALRA), 384-404 (AWLL…FVIG), 409-429 (AALW…VAAL), and 453-473 (GLDA…SLVL).

It belongs to the EccD/Snm4 family. As to quaternary structure, part of the ESX-3 / type VII secretion system (T7SS), which is composed of cytosolic and membrane components. The ESX-3 membrane complex is composed of EccB3, EccC3, EccD3 and EccE3.

The protein localises to the cell inner membrane. In terms of biological role, part of the ESX-3 specialized secretion system, which is required for siderophore-mediated iron acquisition and for the secretion of EsxH and EsxG. The polypeptide is ESX-3 secretion system protein EccD3 (Mycolicibacterium smegmatis (strain ATCC 700084 / mc(2)155) (Mycobacterium smegmatis)).